The chain runs to 313 residues: Biotin synthase (313 aa).

The 231-residue stretch at 28–258 (NFGNDIELCS…LFPQARLRLS (231 aa)) folds into the Radical SAM core domain. [4Fe-4S] cluster is bound by residues Cys46, Cys50, and Cys53. The [2Fe-2S] cluster site is built by Cys90, Cys121, Cys181, and Arg256.

Belongs to the radical SAM superfamily. Biotin synthase family. As to quaternary structure, homodimer. Requires [4Fe-4S] cluster as cofactor. [2Fe-2S] cluster serves as cofactor.

It catalyses the reaction (4R,5S)-dethiobiotin + (sulfur carrier)-SH + 2 reduced [2Fe-2S]-[ferredoxin] + 2 S-adenosyl-L-methionine = (sulfur carrier)-H + biotin + 2 5'-deoxyadenosine + 2 L-methionine + 2 oxidized [2Fe-2S]-[ferredoxin]. The protein operates within cofactor biosynthesis; biotin biosynthesis; biotin from 7,8-diaminononanoate: step 2/2. Catalyzes the conversion of dethiobiotin (DTB) to biotin by the insertion of a sulfur atom into dethiobiotin via a radical-based mechanism. The sequence is that of Biotin synthase from Francisella philomiragia subsp. philomiragia (strain ATCC 25017 / CCUG 19701 / FSC 153 / O#319-036).